A 556-amino-acid polypeptide reads, in one-letter code: Formate--tetrahydrofolate ligase (556 aa).

An ATP-binding site is contributed by 65-72 (TPAGEGKS).

It belongs to the formate--tetrahydrofolate ligase family.

It catalyses the reaction (6S)-5,6,7,8-tetrahydrofolate + formate + ATP = (6R)-10-formyltetrahydrofolate + ADP + phosphate. Its pathway is one-carbon metabolism; tetrahydrofolate interconversion. This Streptococcus equi subsp. zooepidemicus (strain H70) protein is Formate--tetrahydrofolate ligase.